Consider the following 354-residue polypeptide: Elongation factor Ts, mitochondrial (354 aa).

A mitochondrion-targeting transit peptide spans 1 to 47 (MMRSTLSLLQKCRLPNNNGSLLSFKNNQVVNQTALFSMKSNQQYRFY).

This sequence belongs to the EF-Ts family.

The protein resides in the mitochondrion. Its function is as follows. Associates with the EF-Tu.GDP complex and induces the exchange of GDP to GTP. It remains bound to the aminoacyl-tRNA.EF-Tu.GTP complex up to the GTP hydrolysis stage on the ribosome. The chain is Elongation factor Ts, mitochondrial (tsfm) from Heterostelium pallidum (strain ATCC 26659 / Pp 5 / PN500) (Cellular slime mold).